Here is a 262-residue protein sequence, read N- to C-terminus: Adenosylcobinamide-GDP ribazoletransferase (262 aa).

Helical transmembrane passes span Pro-43–Ile-63, Val-121–Leu-141, Gly-145–Trp-165, and Gly-195–Leu-215.

This sequence belongs to the CobS family. Mg(2+) is required as a cofactor.

Its subcellular location is the cell inner membrane. It catalyses the reaction alpha-ribazole + adenosylcob(III)inamide-GDP = adenosylcob(III)alamin + GMP + H(+). The enzyme catalyses alpha-ribazole 5'-phosphate + adenosylcob(III)inamide-GDP = adenosylcob(III)alamin 5'-phosphate + GMP + H(+). It participates in cofactor biosynthesis; adenosylcobalamin biosynthesis; adenosylcobalamin from cob(II)yrinate a,c-diamide: step 7/7. Joins adenosylcobinamide-GDP and alpha-ribazole to generate adenosylcobalamin (Ado-cobalamin). Also synthesizes adenosylcobalamin 5'-phosphate from adenosylcobinamide-GDP and alpha-ribazole 5'-phosphate. In Sinorhizobium medicae (strain WSM419) (Ensifer medicae), this protein is Adenosylcobinamide-GDP ribazoletransferase.